Consider the following 313-residue polypeptide: DNA-directed RNA polymerase subunit alpha (313 aa).

Residues Met-1–Tyr-227 form an alpha N-terminal domain (alpha-NTD) region. Positions Arg-242–Glu-313 are alpha C-terminal domain (alpha-CTD).

This sequence belongs to the RNA polymerase alpha chain family. In terms of assembly, homodimer. The RNAP catalytic core consists of 2 alpha, 1 beta, 1 beta' and 1 omega subunit. When a sigma factor is associated with the core the holoenzyme is formed, which can initiate transcription.

It catalyses the reaction RNA(n) + a ribonucleoside 5'-triphosphate = RNA(n+1) + diphosphate. In terms of biological role, DNA-dependent RNA polymerase catalyzes the transcription of DNA into RNA using the four ribonucleoside triphosphates as substrates. This chain is DNA-directed RNA polymerase subunit alpha, found in Rubrobacter xylanophilus (strain DSM 9941 / JCM 11954 / NBRC 16129 / PRD-1).